We begin with the raw amino-acid sequence, 181 residues long: Lysozyme B (181 aa).

An N-terminal signal peptide occupies residues 1–19 (MRISFFLLILAVIIGYAYG). A propeptide spanning residues 139 to 181 (LTDSRPLGPFNVTEEEKAQLFIDHEIAMAQCEAEKTCNGFDLE) is cleaved from the precursor.

This sequence belongs to the dictyostelium lysozyme family. Post-translationally, contains six disulfide bonds.

It is found in the cytoplasmic vesicle lumen. It catalyses the reaction Hydrolysis of (1-&gt;4)-beta-linkages between N-acetylmuramic acid and N-acetyl-D-glucosamine residues in a peptidoglycan and between N-acetyl-D-glucosamine residues in chitodextrins.. Functionally, has antibacterial activity. This chain is Lysozyme B (alyB), found in Dictyostelium discoideum (Social amoeba).